The primary structure comprises 199 residues: Holliday junction branch migration complex subunit RuvA (199 aa).

Residues 1–63 (MIGKLNGKID…EEHIHLYGFL (63 aa)) form a domain I region. The segment at 64–141 (TLEEKNFFNL…TKIFSSSAII (78 aa)) is domain II. Residues 141–145 (IKDSN) form a flexible linker region. Positions 146–199 (ISSIAINEVMKALVNLGFTRFEAQNTVQGIITQNPKISIDELIKTALKNRNSSF) are domain III.

This sequence belongs to the RuvA family. In terms of assembly, homotetramer. Forms an RuvA(8)-RuvB(12)-Holliday junction (HJ) complex. HJ DNA is sandwiched between 2 RuvA tetramers; dsDNA enters through RuvA and exits via RuvB. An RuvB hexamer assembles on each DNA strand where it exits the tetramer. Each RuvB hexamer is contacted by two RuvA subunits (via domain III) on 2 adjacent RuvB subunits; this complex drives branch migration. In the full resolvosome a probable DNA-RuvA(4)-RuvB(12)-RuvC(2) complex forms which resolves the HJ.

The protein resides in the cytoplasm. Functionally, the RuvA-RuvB-RuvC complex processes Holliday junction (HJ) DNA during genetic recombination and DNA repair, while the RuvA-RuvB complex plays an important role in the rescue of blocked DNA replication forks via replication fork reversal (RFR). RuvA specifically binds to HJ cruciform DNA, conferring on it an open structure. The RuvB hexamer acts as an ATP-dependent pump, pulling dsDNA into and through the RuvAB complex. HJ branch migration allows RuvC to scan DNA until it finds its consensus sequence, where it cleaves and resolves the cruciform DNA. This chain is Holliday junction branch migration complex subunit RuvA, found in Rickettsia prowazekii (strain Madrid E).